A 369-amino-acid polypeptide reads, in one-letter code: DNA replication and repair protein RecF (369 aa).

30–37 (GDNGSGKT) lines the ATP pocket.

The protein belongs to the RecF family.

It localises to the cytoplasm. Functionally, the RecF protein is involved in DNA metabolism; it is required for DNA replication and normal SOS inducibility. RecF binds preferentially to single-stranded, linear DNA. It also seems to bind ATP. The protein is DNA replication and repair protein RecF of Pseudomonas aeruginosa (strain LESB58).